The primary structure comprises 1096 residues: Inactive phospholipase C-like protein 1 (1096 aa).

Residues 1–101 are disordered; sequence MAEGAASREA…KKTVSFSSMP (101 aa). Serine 48 bears the Phosphoserine mark. Residues 49 to 60 show a composition bias toward low complexity; it reads GVALPGAAGVPA. Position 78 is a phosphoserine (serine 78). Residues 83–222 are interaction with PPP1C; the sequence is PSNQKCGGRK…NIWVSGLRYL (140 aa). Threonine 94 is subject to Phosphothreonine. Threonine 94 is modified (phosphothreonine; by PKA). A Phosphoserine; by PKA modification is found at serine 96. The 111-residue stretch at 114-224 folds into the PH domain; it reads SFMQAGCELK…WVSGLRYLVS (111 aa). Residues 399-543 form the PI-PLC X-box domain; the sequence is QDMTQPLSHY…LKNMIIVKGK (145 aa). An interaction with GABA A beta subunit region spans residues 544–568; it reads KLPSESDLLEGEVTDEDEEAEMSRR. A compositionally biased stretch (acidic residues) spans 550–563; sequence DLLEGEVTDEDEEA. Positions 550 to 569 are disordered; the sequence is DLLEGEVTDEDEEAEMSRRM. Phosphothreonine is present on threonine 557. Serine 570 is modified (phosphoserine). The PI-PLC Y-box domain maps to 586 to 702; that stretch reads LSDLVSICKS…GYVLRPSIMR (117 aa). The C2 domain occupies 702–831; that stretch reads RDEVSYFSAN…PGYRHVPLRS (130 aa). Residues 1040–1060 are a coiled coil; it reads DLLKNAKNEAVENIKQIQLAC. Residues 1067–1096 form a disordered region; that stretch reads KGPGGGSEAKGKRSLEAIEEKESSEENGKL. The segment covering 1075 to 1096 has biased composition (basic and acidic residues); that stretch reads AKGKRSLEAIEEKESSEENGKL. Position 1080 is a phosphoserine (serine 1080).

In terms of assembly, interacts with PPP2CA, Ins(1,4,5)P3, Ins(1,4,5,6)P4 GABARAP, GABA receptor beta subunits, GABA receptor gamma-2 subunits and PPP1C. May form a ternary complex with GABA receptor beta subunit and GABARAP. The formation of a ternary complex with GABA receptor beta subunit and GABARAP could be the key step for facilitating the association of GABARAP with the GABA receptor gamma-2 subunit and to allow it to be transported at the right destination. In terms of processing, phosphorylated by the catalytic subunit of PKA. Phosphorylation of Thr-94 resulted in dissociation of PPP1C from PRIP1.

The protein resides in the cytoplasm. Involved in an inositol phospholipid-based intracellular signaling cascade. Shows no PLC activity to phosphatidylinositol 4,5-bisphosphate and phosphatidylinositol. Component in the phospho-dependent endocytosis process of GABA A receptor. Acts as an inhibitor of PPP1C. Involved in the assembly and/or the trafficking of gamma-2 subunit-containing GABA A receptors. The chain is Inactive phospholipase C-like protein 1 (Plcl1) from Mus musculus (Mouse).